Reading from the N-terminus, the 54-residue chain is U1-ctenitoxin-Pr1a (54 aa).

Intrachain disulfides connect cysteine 2–cysteine 19, cysteine 9–cysteine 25, cysteine 16–cysteine 51, cysteine 18–cysteine 39, and cysteine 27–cysteine 37.

Expressed by the venom gland.

It is found in the secreted. Functionally, omega-agatoxins are antagonists of voltage-gated calcium channels (Cav). Causes rapid general flaccid paralysis followed by death in 10-30 minutes when injected in mice at dose levels of 5 ug per mouse. In Phoneutria reidyi (Brazilian Amazonian armed spider), this protein is U1-ctenitoxin-Pr1a.